The chain runs to 535 residues: tRNA-2-methylthio-N(6)-dimethylallyladenosine synthase (535 aa).

The MTTase N-terminal domain occupies Arg-24–His-139. 6 residues coordinate [4Fe-4S] cluster: Cys-33, Cys-68, Cys-102, Cys-176, Cys-180, and Cys-183. The Radical SAM core domain maps to Arg-162–Glu-392. The region spanning Glu-395–Gly-465 is the TRAM domain. The interval Arg-512 to Arg-535 is disordered.

The protein belongs to the methylthiotransferase family. MiaB subfamily. In terms of assembly, monomer. The cofactor is [4Fe-4S] cluster.

The protein localises to the cytoplasm. The enzyme catalyses N(6)-dimethylallyladenosine(37) in tRNA + (sulfur carrier)-SH + AH2 + 2 S-adenosyl-L-methionine = 2-methylsulfanyl-N(6)-dimethylallyladenosine(37) in tRNA + (sulfur carrier)-H + 5'-deoxyadenosine + L-methionine + A + S-adenosyl-L-homocysteine + 2 H(+). In terms of biological role, catalyzes the methylthiolation of N6-(dimethylallyl)adenosine (i(6)A), leading to the formation of 2-methylthio-N6-(dimethylallyl)adenosine (ms(2)i(6)A) at position 37 in tRNAs that read codons beginning with uridine. The sequence is that of tRNA-2-methylthio-N(6)-dimethylallyladenosine synthase from Leifsonia xyli subsp. xyli (strain CTCB07).